We begin with the raw amino-acid sequence, 212 residues long: Uridine kinase (212 aa).

13-20 is a binding site for ATP; the sequence is GGSGSGKT.

It belongs to the uridine kinase family.

The protein localises to the cytoplasm. It carries out the reaction uridine + ATP = UMP + ADP + H(+). It catalyses the reaction cytidine + ATP = CMP + ADP + H(+). Its pathway is pyrimidine metabolism; CTP biosynthesis via salvage pathway; CTP from cytidine: step 1/3. The protein operates within pyrimidine metabolism; UMP biosynthesis via salvage pathway; UMP from uridine: step 1/1. The chain is Uridine kinase from Bacillus mycoides (strain KBAB4) (Bacillus weihenstephanensis).